The primary structure comprises 695 residues: C6 finger domain transcription factor nscR (695 aa).

Residues 17–43 (CELCRERKVKCDKLDPCTNCASAGVVC) constitute a DNA-binding region (zn(2)-C6 fungal-type). Residues 101–113 (SMRSSASQSSNQD) are compositionally biased toward low complexity. The interval 101–146 (SMRSSASQSSNQDQESRDAIESISNETEDASAPTPDSSRMPLGDGG) is disordered.

The protein resides in the nucleus. Its function is as follows. Transcription factor that specifically regulates the neosartoricin B biosynthesis gene cluster. The chain is C6 finger domain transcription factor nscR from Arthroderma otae (strain ATCC MYA-4605 / CBS 113480) (Microsporum canis).